Consider the following 372-residue polypeptide: Cytochrome b (372 aa).

The next 4 membrane-spanning stretches (helical) occupy residues 25-45 (FGSM…FLAI), 69-90 (WIMQ…YIHI), 105-125 (WLSG…GYVL), and 170-190 (FFAL…IHII). The heme b site is built by histidine 75 and histidine 89. Histidine 174 and histidine 188 together coordinate heme b. Histidine 193 provides a ligand contact to a ubiquinone. 4 helical membrane passes run 218-238 (YKDM…LSFS), 280-300 (LGGT…PFTH), 312-332 (LTQT…WTAT), and 339-358 (FISI…IINP).

The protein belongs to the cytochrome b family. The cytochrome bc1 complex contains 3 respiratory subunits (MT-CYB, CYC1 and UQCRFS1), 2 core proteins (UQCRC1 and UQCRC2) and probably 6 low-molecular weight proteins. Heme b serves as cofactor.

It localises to the mitochondrion inner membrane. Its function is as follows. Component of the ubiquinol-cytochrome c reductase complex (complex III or cytochrome b-c1 complex) that is part of the mitochondrial respiratory chain. The b-c1 complex mediates electron transfer from ubiquinol to cytochrome c. Contributes to the generation of a proton gradient across the mitochondrial membrane that is then used for ATP synthesis. The protein is Cytochrome b (MT-CYB) of Dendroaspis polylepis polylepis (Black mamba).